A 906-amino-acid polypeptide reads, in one-letter code: Glutamate receptor 1 (906 aa).

The N-terminal stretch at 1 to 18 (MQHIFAFFCTGFLGAVVG) is a signal peptide. Residues 19–536 (ANFPNNIQIG…GVFSFLDPLA (518 aa)) are Extracellular-facing. Asn63, Asn249, Asn257, Asn363, Asn401, and Asn406 each carry an N-linked (GlcNAc...) asparagine glycan. Cys75 and Cys323 are oxidised to a cystine. Positions 492, 494, and 499 each coordinate L-glutamate. The helical transmembrane segment at 537 to 557 (YEIWMCIVFAYIGVSVVLFLV) threads the bilayer. Residues 558–584 (SRFSPYEWHSEEFEEGRDQTTSDQSNE) are Cytoplasmic-facing. The helical; Pore-forming intramembrane region spans 585-600 (FGIFNSLWFSLGAFMQ). An intramembrane segment occupies 601-603 (QGC). Residue Cys603 is the site of S-palmitoyl cysteine attachment. The Cytoplasmic segment spans residues 604–609 (DISPRS). A helical transmembrane segment spans residues 610–630 (LSGRIVGGVWWFFTLIIISSY). At 631 to 805 (TANLAAFLTV…DKTSALSLSN (175 aa)) the chain is on the extracellular side. Ser645 is modified (phosphoserine). Positions 668 and 669 each coordinate L-glutamate. Position 710 is a phosphoserine (Ser710). Residue Glu719 coordinates L-glutamate. Cys732 and Cys787 are joined by a disulfide. A helical membrane pass occupies residues 806-826 (VAGVFYILIGGLGLAMLVALI). Residues 827-906 (EFCYKSRSES…SGMPLGATGL (80 aa)) lie on the Cytoplasmic side of the membrane. Cys829 is lipidated: S-palmitoyl cysteine. Residues Ser849 and Ser863 each carry the phosphoserine modification. The segment at 861 to 880 (RNSGAGASSGGSGENGRVVS) is disordered. Residues 903-906 (ATGL) carry the PDZ-binding motif.

The protein belongs to the glutamate-gated ion channel (TC 1.A.10.1) family. GRIA1 subfamily. In terms of assembly, homotetramer or heterotetramer of pore-forming glutamate receptor subunits; heteromeric assembly can be the result of both receptor subtype and flip or flop form and according the composition, one partner can be dominant with respect to the fast desensitizing current component, whereas the other can determine the steady-state component. Tetramers may be formed by the dimerization of dimers. Found in a complex with GRIA2, GRIA3, GRIA4, CNIH2, CNIH3, CACNG2, CACNG3, CACNG4, CACNG5, CACNG7 and CACNG8. Interacts with HIP1 and RASGRF2. Interacts with SYNDIG1 and GRIA2. Interacts with DLG1 (via C-terminus). Interacts with LRFN1. Interacts with PRKG2. Interacts with CNIH2 and CACNG2. Interacts with CACNG5; this interaction modulates the gating. Interacts (via C-terminus) with PDLIM4 (via LIM domain); this interaction as well as the interaction of PDLIM4 with alpha-actinin is required for their colocalization in early endosomes. Interacts with SNX27 (via PDZ domain); the interaction is required for recycling to the plasma membrane when endocytosed and prevent degradation in lysosomes. Interacts (via PDZ-binding motif) with SHANK3 (via PDZ domain). Interacts with CACNG3; associates GRIA1 with the adapter protein complex 4 (AP-4) to target GRIA1 to the somatodendritic compartment of neurons. Interacts with CACNG2; this interaction mediates traffick to the plasma membrane and modulation of desensitization. Interacts with CNIH2 and CNIH3; this interaction promotes expression at the plasma membrane and extensively modulates their gating properties by slowing deactivation and desensitization kinetics. Found in a complex with GRIA2, GRIA3, GRIA4, DLG4, CACNG8 and CNIH2. Post-translationally, palmitoylated. Depalmitoylated by CPT1C and upon L-glutamate stimulation. ZDHHC3/GODZ specifically palmitoylates Cys-603, which leads to Golgi retention and decreased cell surface expression. In contrast, Cys-829 palmitoylation does not affect cell surface expression but regulates stimulation-dependent endocytosis. In terms of processing, phosphorylated at Ser-645. Phosphorylated at Ser-710 by PKC. Phosphorylated at Ser-849 by PKC, PKA and CAMK2. Phosphorylated at Ser-863 by PKC, PKA and PRKG2. Phosphorylation of Ser-863 is reduced by induction of long-term depression and increased by induction of long-term potentiation. Widely expressed in brain.

The protein localises to the cell membrane. It is found in the endoplasmic reticulum membrane. The protein resides in the postsynaptic cell membrane. Its subcellular location is the postsynaptic density membrane. It localises to the cell projection. The protein localises to the dendrite. It is found in the dendritic spine. The protein resides in the early endosome membrane. Its subcellular location is the recycling endosome membrane. It localises to the presynapse. The protein localises to the synapse. It carries out the reaction Ca(2+)(in) = Ca(2+)(out). The catalysed reaction is Na(+)(in) = Na(+)(out). It catalyses the reaction Mg(2+)(in) = Mg(2+)(out). The enzyme catalyses Li(+)(in) = Li(+)(out). It carries out the reaction K(+)(in) = K(+)(out). The catalysed reaction is Sr(2+)(in) = Sr(2+)(out). Its function is as follows. Ionotropic glutamate receptor that functions as a ligand-gated cation channel, gated by L-glutamate and glutamatergic agonists such as alpha-amino-3-hydroxy-5-methyl-4-isoxazolepropionic acid (AMPA), quisqualic acid, and kainic acid. L-glutamate acts as an excitatory neurotransmitter at many synapses in the central nervous system. Binding of the excitatory neurotransmitter L-glutamate induces a conformation change, leading to the opening of the cation channel, and thereby converts the chemical signal to an electrical impulse upon entry of monovalent and divalent cations such as sodium and calcium. The receptor then desensitizes rapidly and enters in a transient inactive state, characterized by the presence of bound agonist. In the presence of CACNG2 or CACNG4 or CACNG7 or CACNG8, shows resensitization which is characterized by a delayed accumulation of current flux upon continued application of L-glutamate. Resensitization is blocked by CNIH2 through interaction with CACNG8 in the CACNG8-containing AMPA receptors complex. Calcium (Ca(2+)) permeability depends on subunits composition and, heteromeric channels containing edited GRIA2 subunit are calcium-impermeable. Also permeable to other divalents cations such as strontium(2+) and magnesium(2+) and monovalent cations such as potassium(1+) and lithium(1+). The chain is Glutamate receptor 1 from Homo sapiens (Human).